A 681-amino-acid chain; its full sequence is Potassium-transporting ATPase ATP-binding subunit 1 (681 aa).

4 helical membrane-spanning segments follow: residues 30–50 (LLVYVGAILATSLYFLGFFGI), 59–79 (LAIALILWFTVLFANFAEAIA), 216–236 (ILLVTLSIIFLAVSATLLPFT), and 255–275 (IALLVCLAPTTIGALLSSIGI). Residue D306 is the 4-aspartylphosphate intermediate of the active site. ATP is bound by residues D343, E347, 376 to 383 (FTATTRMS), and K394. Mg(2+) is bound by residues D517 and D521. The next 3 helical transmembrane spans lie at 587 to 607 (FAIIPVLFYGIFPQLEALNLM), 615 to 635 (AILSAIIYNAVIIIFLIPLSL), and 661 to 681 (LIAPFIAIKLIDMLLTVLGIV).

This sequence belongs to the cation transport ATPase (P-type) (TC 3.A.3) family. Type IA subfamily. The system is composed of three essential subunits: KdpA, KdpB and KdpC.

The protein resides in the cell membrane. It carries out the reaction K(+)(out) + ATP + H2O = K(+)(in) + ADP + phosphate + H(+). Part of the high-affinity ATP-driven potassium transport (or Kdp) system, which catalyzes the hydrolysis of ATP coupled with the electrogenic transport of potassium into the cytoplasm. This subunit is responsible for energy coupling to the transport system and for the release of the potassium ions to the cytoplasm. This is Potassium-transporting ATPase ATP-binding subunit 1 from Listeria innocua serovar 6a (strain ATCC BAA-680 / CLIP 11262).